Here is an 87-residue protein sequence, read N- to C-terminus: Small ribosomal subunit protein uS17 (87 aa).

Belongs to the universal ribosomal protein uS17 family. In terms of assembly, part of the 30S ribosomal subunit.

In terms of biological role, one of the primary rRNA binding proteins, it binds specifically to the 5'-end of 16S ribosomal RNA. This chain is Small ribosomal subunit protein uS17, found in Chromobacterium violaceum (strain ATCC 12472 / DSM 30191 / JCM 1249 / CCUG 213 / NBRC 12614 / NCIMB 9131 / NCTC 9757 / MK).